We begin with the raw amino-acid sequence, 239 residues long: Proteasome activator complex subunit 2 (239 aa).

The residue at position 2 (alanine 2) is an N-acetylalanine. At serine 10 the chain carries Phosphoserine. Residues 65–86 (DIPIPDPPPKDDEMETDKQEKK) are disordered. A compositionally biased stretch (basic and acidic residues) spans 72–86 (PPKDDEMETDKQEKK).

This sequence belongs to the PA28 family. In terms of assembly, heterodimer of PSME1 and PSME2, which forms a hexameric ring.

In terms of biological role, implicated in immunoproteasome assembly and required for efficient antigen processing. The PA28 activator complex enhances the generation of class I binding peptides by altering the cleavage pattern of the proteasome. This chain is Proteasome activator complex subunit 2 (PSME2), found in Sus scrofa (Pig).